A 161-amino-acid chain; its full sequence is Phosphopantetheine adenylyltransferase (161 aa).

Thr9 contributes to the substrate binding site. ATP contacts are provided by residues 9–10 (TF) and His17. The substrate site is built by Lys41, Leu73, and Arg87. Residues 88 to 90 (GLR), Glu98, and 123 to 129 (LSYISST) contribute to the ATP site.

Belongs to the bacterial CoaD family. As to quaternary structure, homohexamer. Requires Mg(2+) as cofactor.

Its subcellular location is the cytoplasm. It carries out the reaction (R)-4'-phosphopantetheine + ATP + H(+) = 3'-dephospho-CoA + diphosphate. Its pathway is cofactor biosynthesis; coenzyme A biosynthesis; CoA from (R)-pantothenate: step 4/5. Reversibly transfers an adenylyl group from ATP to 4'-phosphopantetheine, yielding dephospho-CoA (dPCoA) and pyrophosphate. The sequence is that of Phosphopantetheine adenylyltransferase from Hahella chejuensis (strain KCTC 2396).